The chain runs to 671 residues: MESIEQQLTELRTTLRHHEYLYHVMDAPEIPDAEYDRLMRELRELETKHPELITPDSPTQRVGAAPLAAFSQIRHEVPMLSLDNVFDEESFLAFNKRVQDRLKSNEKVTWCCELKLDGLAVSILYENGVLVSAATRGDGTTGEDITSNVRTILAIPLKLHGENIPARLEVRGEVFLPQAGFEKINEDARRTGGKVFANPRNAAAGSLRQLDPRITAKRPLTFFCYGVGVLEGSELPDTHLGRLLQFKKWGLPVSDRVTLCESAEEVLVFYHKVEEDRPTLGFDIDGVVIKVNSLAQQEQLGFVARAPRWAVAFKFPAQEQMTFVRDVEFQVGRTGAITPVARLEPVHVAGVLVSNATLHNADEIERLGLRIGDKVVIRRAGDVIPQVVNVVLSERPEDSREVVFPTHCPVCGSDVERVEGEAVARCTGGLICGAQRKESLKHFVSRRAMDVDGMGDKIIDQLVEKEYVHTPADLFKLTAGKLTGLERMGPKSAQNVVNALEKAKETTFARFLYALGIREVGEATAAGLAAYFGTLEALEAASIEELQKVPDVGIVVASHVHNFFAEESNRNVISELLAEGVHWPAPIVINAEEIDSPFAGKTVVLTGSLSQMSRDDAKARLVELGAKVAGSVSKKTDLVIAGEAAGSKLAKAQELGIEVIDEAEMLRLLGS.

Residues Asp-32–Asp-36, Ser-81–Leu-82, and Glu-113 contribute to the NAD(+) site. Lys-115 functions as the N6-AMP-lysine intermediate in the catalytic mechanism. NAD(+)-binding residues include Arg-136, Glu-173, Lys-290, and Lys-314. Cys-408, Cys-411, Cys-426, and Cys-432 together coordinate Zn(2+). The region spanning Glu-593–Ser-671 is the BRCT domain.

Belongs to the NAD-dependent DNA ligase family. LigA subfamily. The cofactor is Mg(2+). Mn(2+) is required as a cofactor.

The enzyme catalyses NAD(+) + (deoxyribonucleotide)n-3'-hydroxyl + 5'-phospho-(deoxyribonucleotide)m = (deoxyribonucleotide)n+m + AMP + beta-nicotinamide D-nucleotide.. In terms of biological role, DNA ligase that catalyzes the formation of phosphodiester linkages between 5'-phosphoryl and 3'-hydroxyl groups in double-stranded DNA using NAD as a coenzyme and as the energy source for the reaction. It is essential for DNA replication and repair of damaged DNA. This is DNA ligase from Shigella dysenteriae serotype 1 (strain Sd197).